The sequence spans 557 residues: Potassium-transporting ATPase potassium-binding subunit (557 aa).

10 helical membrane passes run 1-21 (MEIL…IPIG), 62-82 (QYIF…YIIL), 132-152 (IVIT…ALAF), 176-196 (ILLP…VPQT), 253-273 (VQII…GHMI), 279-299 (AVAI…ICFS), 371-391 (IFGG…LTVF), 415-435 (LVAF…ALAL), 482-502 (VSAG…LLAV), and 528-548 (VTLI…AVAL).

It belongs to the KdpA family. As to quaternary structure, the system is composed of three essential subunits: KdpA, KdpB and KdpC.

It localises to the cell membrane. Part of the high-affinity ATP-driven potassium transport (or Kdp) system, which catalyzes the hydrolysis of ATP coupled with the electrogenic transport of potassium into the cytoplasm. This subunit binds the extracellular potassium ions and delivers the ions to the membrane domain of KdpB through an intramembrane tunnel. The protein is Potassium-transporting ATPase potassium-binding subunit of Clostridium acetobutylicum (strain ATCC 824 / DSM 792 / JCM 1419 / IAM 19013 / LMG 5710 / NBRC 13948 / NRRL B-527 / VKM B-1787 / 2291 / W).